Reading from the N-terminus, the 344-residue chain is uncharacterized protein (344 aa).

A disordered region spans residues 95 to 344 (TINPEDANED…TPAKKNSKGR (250 aa)). The span at 103–123 (EDAKVKNSLKLEKEEGSDEKS) shows a compositional bias: basic and acidic residues. Over residues 135–155 (SDDESDNSNDSEESEAEDSDQ) the composition is skewed to acidic residues. Residues 191–200 (SAKNAKASKP) show a composition bias toward low complexity. Residues 244-259 (SEDEDSGSDNSEEESE) are compositionally biased toward acidic residues. The segment covering 265-276 (ASSKKPPSKSSK) has biased composition (basic residues). The span at 281–314 (EDEDEDSGQSESEHSEEESNSDEDSGQSEEESEE) shows a compositional bias: acidic residues. The span at 331-344 (TAKKTPAKKNSKGR) shows a compositional bias: basic residues.

This is an uncharacterized protein from Acanthamoeba polyphaga (Amoeba).